A 964-amino-acid polypeptide reads, in one-letter code: Fanconi-associated nuclease 1 homolog (964 aa).

The segment at 31 to 56 (SRSLQDDAADAEREAAAGGSSSGGGD) is disordered. A UBZ4-type zinc finger spans residues 63–92 (WVACPVCGESIRGTDYCVNTHLDICLTRGT). The Zn(2+) site is built by Cys-66, Cys-69, His-83, and Cys-87. Glu-786, Asp-907, Glu-926, and Val-927 together coordinate Mn(2+). The VRR-NUC domain maps to 844-958 (GIAEEILISS…GFDVEVCKVS (115 aa)).

It belongs to the FAN1 family. The cofactor is Mn(2+). Mg(2+) is required as a cofactor.

The enzyme catalyses Hydrolytically removes 5'-nucleotides successively from the 3'-hydroxy termini of 3'-hydroxy-terminated oligonucleotides.. Nuclease required for the repair of DNA interstrand cross-links (ICL). Acts as a 5'-3' exonuclease that anchors at a cut end of DNA and cleaves DNA successively at every third nucleotide, allowing to excise an ICL from one strand through flanking incisions. The sequence is that of Fanconi-associated nuclease 1 homolog from Oryza sativa subsp. japonica (Rice).